Reading from the N-terminus, the 249-residue chain is MPQSPEQPDVSSTVSYNRVMLKISGEALMGTQGFGLHPPTVRRIAEEVKSVHDLGVEICMVIGGGNIFRGLSGSAQGMERTTADYMGMLATVMNALGMQSALEDLGVFTRVISAIRMDEVAEPYIRRRAVRHLEKKRVCIFAAGTGNPYFTTDTAATLRANEMNCEAIFMGKNGVDGVYDKDPKTNEDAKRYDSVSYDDVLAKRLKVMDASAIALARDNNLPLIVFGLDEPGGFRGVLAGEGTYTKVHG.

Position 22–25 (22–25 (KISG)) interacts with ATP. The involved in allosteric activation by GTP stretch occupies residues 30-35 (GTQGFG). G64 serves as a coordination point for UMP. 2 residues coordinate ATP: G65 and R69. UMP is bound by residues D84 and 145–152 (TGNPYFTT). N173, Y179, and D182 together coordinate ATP.

This sequence belongs to the UMP kinase family. Homohexamer.

Its subcellular location is the cytoplasm. The enzyme catalyses UMP + ATP = UDP + ADP. It participates in pyrimidine metabolism; CTP biosynthesis via de novo pathway; UDP from UMP (UMPK route): step 1/1. Allosterically activated by GTP. Inhibited by UTP. In terms of biological role, catalyzes the reversible phosphorylation of UMP to UDP. This chain is Uridylate kinase, found in Ruegeria sp. (strain TM1040) (Silicibacter sp.).